The following is a 109-amino-acid chain: Nucleoid-associated protein Plut_1285 (109 aa).

It belongs to the YbaB/EbfC family. As to quaternary structure, homodimer.

The protein resides in the cytoplasm. It is found in the nucleoid. Functionally, binds to DNA and alters its conformation. May be involved in regulation of gene expression, nucleoid organization and DNA protection. This chain is Nucleoid-associated protein Plut_1285, found in Chlorobium luteolum (strain DSM 273 / BCRC 81028 / 2530) (Pelodictyon luteolum).